We begin with the raw amino-acid sequence, 204 residues long: GTP cyclohydrolase 1 (204 aa).

Positions 92, 95, and 165 each coordinate Zn(2+).

The protein belongs to the GTP cyclohydrolase I family. Homomer.

The enzyme catalyses GTP + H2O = 7,8-dihydroneopterin 3'-triphosphate + formate + H(+). Its pathway is cofactor biosynthesis; 7,8-dihydroneopterin triphosphate biosynthesis; 7,8-dihydroneopterin triphosphate from GTP: step 1/1. In Mycobacteroides abscessus (strain ATCC 19977 / DSM 44196 / CCUG 20993 / CIP 104536 / JCM 13569 / NCTC 13031 / TMC 1543 / L948) (Mycobacterium abscessus), this protein is GTP cyclohydrolase 1.